Here is a 452-residue protein sequence, read N- to C-terminus: Alkane uptake protein A (452 aa).

Positions 1-36 (MSERSVYMVLSPRFSVRAVSLAVAAVSASLSMPTSA) are cleaved as a signal peptide.

Belongs to the OmpP1/FadL family. As to quaternary structure, interacts with the inner membrane protein AupB.

It is found in the cell outer membrane. Functionally, required for growth on alkanes. Probably involved in the uptake of micelle-solubilized alkanes. The protein is Alkane uptake protein A of Marinobacter nauticus (strain ATCC 49840 / DSM 8798 / CIP 103578 / SP17) (Marinobacter hydrocarbonoclasticus).